A 41-amino-acid chain; its full sequence is Photosystem I reaction center subunit IX (41 aa).

A helical membrane pass occupies residues 7 to 27 (YLSVAPVLSTLWFGALAGLLI).

This sequence belongs to the PsaJ family.

It is found in the plastid. The protein resides in the chloroplast thylakoid membrane. Its function is as follows. May help in the organization of the PsaE and PsaF subunits. The polypeptide is Photosystem I reaction center subunit IX (Jasminum nudiflorum (Winter jasmine)).